The following is a 468-amino-acid chain: ATP synthase subunit beta (468 aa).

Residue 148–155 (GGAGVGKT) participates in ATP binding.

This sequence belongs to the ATPase alpha/beta chains family. F-type ATPases have 2 components, CF(1) - the catalytic core - and CF(0) - the membrane proton channel. CF(1) has five subunits: alpha(3), beta(3), gamma(1), delta(1), epsilon(1). CF(0) has three main subunits: a(1), b(2) and c(9-12). The alpha and beta chains form an alternating ring which encloses part of the gamma chain. CF(1) is attached to CF(0) by a central stalk formed by the gamma and epsilon chains, while a peripheral stalk is formed by the delta and b chains.

The protein localises to the cell inner membrane. The catalysed reaction is ATP + H2O + 4 H(+)(in) = ADP + phosphate + 5 H(+)(out). Functionally, produces ATP from ADP in the presence of a proton gradient across the membrane. The catalytic sites are hosted primarily by the beta subunits. The protein is ATP synthase subunit beta of Stenotrophomonas maltophilia (strain R551-3).